The chain runs to 191 residues: Small ribosomal subunit protein uS5 (191 aa).

The region spanning 21 to 84 is the S5 DRBM domain; it reads FADRLVAINR…EQAKRQMIRV (64 aa). Residues 155–191 are disordered; sequence LRKESSPRSVAQRRGKKVADILPKVDAAPAPAETAEA. Positions 181-191 are enriched in low complexity; that stretch reads AAPAPAETAEA.

Belongs to the universal ribosomal protein uS5 family. Part of the 30S ribosomal subunit. Contacts proteins S4 and S8.

Its function is as follows. With S4 and S12 plays an important role in translational accuracy. Functionally, located at the back of the 30S subunit body where it stabilizes the conformation of the head with respect to the body. The polypeptide is Small ribosomal subunit protein uS5 (Roseobacter denitrificans (strain ATCC 33942 / OCh 114) (Erythrobacter sp. (strain OCh 114))).